The sequence spans 67 residues: uncharacterized protein (67 aa).

2 helical membrane-spanning segments follow: residues 10–32 (NLSHVLALFLVSFILMAPYTAFI) and 44–66 (ATLTGIVAGILSNPGLFAYMGQW).

The protein resides in the cell membrane. This is an uncharacterized protein from Archaeoglobus fulgidus (strain ATCC 49558 / DSM 4304 / JCM 9628 / NBRC 100126 / VC-16).